The chain runs to 498 residues: Glutamyl-tRNA(Gln) amidotransferase subunit A (498 aa).

Catalysis depends on charge relay system residues lysine 80 and serine 155. A disordered region spans residues 132 to 159 (SSTENSAYGPTRNPWDTDRVPGGSSGGS). Serine 179 (acyl-ester intermediate) is an active-site residue.

It belongs to the amidase family. GatA subfamily. Heterotrimer of A, B and C subunits.

The catalysed reaction is L-glutamyl-tRNA(Gln) + L-glutamine + ATP + H2O = L-glutaminyl-tRNA(Gln) + L-glutamate + ADP + phosphate + H(+). Its function is as follows. Allows the formation of correctly charged Gln-tRNA(Gln) through the transamidation of misacylated Glu-tRNA(Gln) in organisms which lack glutaminyl-tRNA synthetase. The reaction takes place in the presence of glutamine and ATP through an activated gamma-phospho-Glu-tRNA(Gln). The protein is Glutamyl-tRNA(Gln) amidotransferase subunit A of Thermobifida fusca (strain YX).